A 130-amino-acid polypeptide reads, in one-letter code: Small ribosomal subunit protein uS9 (130 aa).

Positions 108-130 are disordered; it reads SREKERKKYGQRGARARFQYSKR.

It belongs to the universal ribosomal protein uS9 family.

The polypeptide is Small ribosomal subunit protein uS9 (Solidesulfovibrio magneticus (strain ATCC 700980 / DSM 13731 / RS-1) (Desulfovibrio magneticus)).